A 386-amino-acid polypeptide reads, in one-letter code: Succinate--CoA ligase [ADP-forming] subunit beta (386 aa).

Residues 9-244 (KEILRKYGVP…HDEEDPLETR (236 aa)) form the ATP-grasp domain. Residues Lys-46, 53–55 (GRG), Glu-99, Cys-102, and Glu-107 each bind ATP. Mg(2+) contacts are provided by Asn-199 and Asp-213. Substrate-binding positions include Asn-264 and 321–323 (GIM).

It belongs to the succinate/malate CoA ligase beta subunit family. As to quaternary structure, heterotetramer of two alpha and two beta subunits. It depends on Mg(2+) as a cofactor.

It carries out the reaction succinate + ATP + CoA = succinyl-CoA + ADP + phosphate. The catalysed reaction is GTP + succinate + CoA = succinyl-CoA + GDP + phosphate. The protein operates within carbohydrate metabolism; tricarboxylic acid cycle; succinate from succinyl-CoA (ligase route): step 1/1. Functionally, succinyl-CoA synthetase functions in the citric acid cycle (TCA), coupling the hydrolysis of succinyl-CoA to the synthesis of either ATP or GTP and thus represents the only step of substrate-level phosphorylation in the TCA. The beta subunit provides nucleotide specificity of the enzyme and binds the substrate succinate, while the binding sites for coenzyme A and phosphate are found in the alpha subunit. The polypeptide is Succinate--CoA ligase [ADP-forming] subunit beta (Rickettsia rickettsii (strain Iowa)).